Consider the following 301-residue polypeptide: Protein ARMCX6 (301 aa).

Residues 1–6 are mitochondrion outer membrane (MOM)-targeting sequence; the sequence is MGRARE. Topologically, residues 1-7 are mitochondrial intermembrane; it reads MGRAREM. A helical; Signal-anchor transmembrane segment spans residues 8–25; that stretch reads GWMAAGLMIGAGACYCMY. Residues 26 to 36 are mitochondrion outer membrane (MOM)-targeting sequence; the sequence is KLTMGRSEGNE. Residues 26–301 lie on the Cytoplasmic side of the membrane; sequence KLTMGRSEGN…REMLVEAISP (276 aa). A disordered region spans residues 69–101; that stretch reads WSEDGDWDEPGAPGGTEDRRSGGGKANRAHPIK.

The protein belongs to the eutherian X-chromosome-specific Armcx family. In terms of tissue distribution, highly expressed in the developing neural tissues, neural crest derivatives and hind limbs. Also widely expressed in the adult nervous tissue, especially in the forebrain, including the cerebral cortex, hippocampus and thalamus.

Its subcellular location is the mitochondrion. It is found in the mitochondrion outer membrane. Its function is as follows. May regulate the dynamics and distribution of mitochondria in neural cells. The polypeptide is Protein ARMCX6 (Armcx6) (Mus musculus (Mouse)).